The following is a 43-amino-acid chain: Subtilosin-A (43 aa).

Residues 1 to 8 (MKKAVIVE) constitute a propeptide that is removed on maturation. The segment at residues 9–43 (NKGCATCSIGAACLVDGPIPDFEIAGATGLFGLWG) is a cross-link (cyclopeptide (Asn-Gly)). A cross-link (2-cysteinyl-D-phenylalanine (Cys-Phe)) is located at residues 12–39 (CATCSIGAACLVDGPIPDFEIAGATGLF). The 2-cysteinyl-D-allo-threonine (Cys-Thr) cross-link spans 15 to 36 (CSIGAACLVDGPIPDFEIAGAT). A cross-link (2-cysteinyl-L-phenylalanine (Cys-Phe)) is located at residues 21 to 30 (CLVDGPIPDF).

Belongs to the bacteriocin class V family. In terms of processing, this sactipeptide undergoes unique processing steps that include proteolytic cleavage after Glu-8, and covalent linkage of the alpha-amino of Asn-9 with the carboxyl of Gly-43 to form a cyclopeptide. Thioether cross-links are formed between cysteines and the alpha-carbons of other amino acids, Cys-12 to Phe-39, Cys-15 to Thr-36, and Cys-21 to Phe-30. In forming these cross-links, Thr-36 and Phe-39 are converted to D-amino acids. Propeptide cleavage and cyclopeptide formation only occur after all 3 thioether cross-links are formed.

The protein localises to the secreted. Functionally, has bacteriocidal activity against some Gram-positive bacteria such as Listeria, some species of Bacillus and E.faecium. A single mutation (Thr-14-Ile) confers hemolytic activity against rabbit and human blood. This chain is Subtilosin-A (sboA), found in Bacillus subtilis (strain 168).